A 193-amino-acid polypeptide reads, in one-letter code: uncharacterized protein (193 aa).

Residues 86 to 181 are a coiled coil; it reads TKQRELLEIL…QVEEVQAEVG (96 aa).

This is an uncharacterized protein from Streptococcus pyogenes serotype M6 (strain ATCC BAA-946 / MGAS10394).